We begin with the raw amino-acid sequence, 626 residues long: MQLLLSSVCMALTSAVIGFAYYQKQQFYPAVVYITKSNASMGVIYIQFFVIVFMFGKLLSKIFLGTLRAAEFEHLLERFWYALTETCLAFTVFRDDFNPRFVALFTVLLFLKSFHWLAEERVDFMERSPVLGWLFHIRVGSLLTVLGILDYVLLIHAYNSTLVRGPTVQLVFGFEYAILLTVIASTAIKYVLHAAEMRTDTPWENKAVFLLYTELVIGLIKVVLYILFVVIMAKIYALPMFVFRPMFFTIRNFRKALNDVIMSRRAIRNMNTLYPDATPEELRQSDNICIICREDMVNHSKKLPCGHIFHTTCLRSWFQRQQTCPTCRLNILRTPTVNSTAMPRQGDEAVAAAAGNPIPAAAGVQPAGGVPPPAPTAVVDGNQARADVNVAGGQALPPNFADLFGDASGLPNGLPNLAGLQIPPPPVMPMISPFMIPPHFGYLTPLPPPPIPQDLTNFTDEELRAMEGLQRDHIVQRLKLLQNINLMLDSAGIMMSQYQSLSARLQLTAVTPATAVNGSADSSVYDMPSTSATAMAQLETHQVTPTAAASSASPTMPAEKVTIEDLGADADEDDIPSTATEAVSIPNSDADFEENSSELGELRKRRLKFLEERNKSAATNERTTAE.

The first 15 residues, 1 to 15, serve as a signal peptide directing secretion; the sequence is MQLLLSSVCMALTSA. Residues 16 to 38 lie on the Lumenal side of the membrane; sequence VIGFAYYQKQQFYPAVVYITKSN. A helical membrane pass occupies residues 39 to 59; it reads ASMGVIYIQFFVIVFMFGKLL. At 60–96 the chain is on the cytoplasmic side; it reads SKIFLGTLRAAEFEHLLERFWYALTETCLAFTVFRDD. The helical transmembrane segment at 97 to 117 threads the bilayer; it reads FNPRFVALFTVLLFLKSFHWL. Residues 118–128 lie on the Lumenal side of the membrane; the sequence is AEERVDFMERS. The helical transmembrane segment at 129-149 threads the bilayer; sequence PVLGWLFHIRVGSLLTVLGIL. Residues 150 to 167 are Cytoplasmic-facing; that stretch reads DYVLLIHAYNSTLVRGPT. A helical membrane pass occupies residues 168–188; that stretch reads VQLVFGFEYAILLTVIASTAI. At 189–222 the chain is on the lumenal side; sequence KYVLHAAEMRTDTPWENKAVFLLYTELVIGLIKV. The helical transmembrane segment at 223–243 threads the bilayer; it reads VLYILFVVIMAKIYALPMFVF. An interaction with p53/TP53 region spans residues 234-268; it reads KIYALPMFVFRPMFFTIRNFRKALNDVIMSRRAIR. Residues 244–626 lie on the Cytoplasmic side of the membrane; the sequence is RPMFFTIRNF…AATNERTTAE (383 aa). The RING-type; atypical zinc finger occupies 289 to 328; it reads CIICREDMVNHSKKLPCGHIFHTTCLRSWFQRQQTCPTCR. The interval 569–600 is disordered; sequence DADEDDIPSTATEAVSIPNSDADFEENSSELG. Over residues 577–587 the composition is skewed to polar residues; that stretch reads STATEAVSIPN.

Belongs to the HRD1 family. As to quaternary structure, homodimer. Interacts with p53. May interact with Septin2.

It localises to the endoplasmic reticulum membrane. The enzyme catalyses S-ubiquitinyl-[E2 ubiquitin-conjugating enzyme]-L-cysteine + [acceptor protein]-L-lysine = [E2 ubiquitin-conjugating enzyme]-L-cysteine + N(6)-ubiquitinyl-[acceptor protein]-L-lysine.. Its pathway is protein modification; protein ubiquitination. Its function is as follows. Acts as an E3 ubiquitin-protein ligase which accepts ubiquitin specifically from endoplasmic reticulum-associated UBC7 E2 ligase and transfers it to substrates, promoting their degradation. Component of the endoplasmic reticulum quality control (ERQC) system also called ER-associated degradation (ERAD) involved in ubiquitin-dependent degradation of misfolded endoplasmic reticulum proteins. Also promotes the degradation of normal but naturally short-lived proteins. Protects cells from ER stress-induced apoptosis. Sequesters p53 in the cytoplasm and promotes its degradation, thereby negatively regulating its biological function in transcription, cell cycle regulation and apoptosis. In Drosophila melanogaster (Fruit fly), this protein is E3 ubiquitin-protein ligase HRD1 (sip3).